The primary structure comprises 463 residues: tRNA modification GTPase MnmE (463 aa).

(6S)-5-formyl-5,6,7,8-tetrahydrofolate is bound by residues Arg-30, Glu-92, and Arg-132. One can recognise a TrmE-type G domain in the interval 227 to 386 (GLRVALVGRP…LVQAVLERCG (160 aa)). Asn-237 contributes to the K(+) binding site. GTP contacts are provided by residues 237-242 (NVGKSS), 256-262 (TDLPGTT), 281-284 (DTAG), and 342-345 (NKAD). Residue Ser-241 coordinates Mg(2+). K(+) is bound by residues Thr-256, Leu-258, and Thr-261. Thr-262 provides a ligand contact to Mg(2+). Residue Lys-463 participates in (6S)-5-formyl-5,6,7,8-tetrahydrofolate binding.

The protein belongs to the TRAFAC class TrmE-Era-EngA-EngB-Septin-like GTPase superfamily. TrmE GTPase family. In terms of assembly, homodimer. Heterotetramer of two MnmE and two MnmG subunits. K(+) is required as a cofactor.

Its subcellular location is the cytoplasm. Functionally, exhibits a very high intrinsic GTPase hydrolysis rate. Involved in the addition of a carboxymethylaminomethyl (cmnm) group at the wobble position (U34) of certain tRNAs, forming tRNA-cmnm(5)s(2)U34. In Synechococcus sp. (strain CC9311), this protein is tRNA modification GTPase MnmE.